The primary structure comprises 250 residues: Superoxide dismutase 1 copper chaperone (250 aa).

The region spanning 4–67 (SFEIVFAVPM…AIQSTGKDAI (64 aa)) is the HMA domain. Residues C15, C18, C229, and C231 each coordinate Cu cation.

It belongs to the CCS1 family. Cu(2+) is required as a cofactor.

The protein resides in the cytoplasm. Functionally, copper chaperone for superoxide dismutase 1 (SOD1). Binds copper ions and delivers them specifically to SOD1. This Debaryomyces hansenii (strain ATCC 36239 / CBS 767 / BCRC 21394 / JCM 1990 / NBRC 0083 / IGC 2968) (Yeast) protein is Superoxide dismutase 1 copper chaperone (CCS1).